The chain runs to 306 residues: Mitochondrial substrate carrier family protein ucpA (306 aa).

Residues 1–15 (MSVNLNNNKNNKNKV) are Mitochondrial intermembrane-facing. Solcar repeat units lie at residues 13–103 (NKVA…ISNA), 112–204 (YFFL…CKNL), and 211–301 (DGIY…FKKL). The chain crosses the membrane as a helical span at residues 16–36 (AIGFISGSLASICATTVTNPI). Topologically, residues 37–83 (ELVKTRLQLQGELQLSQRIYNGVWDAFKQIYKTEGIRGLQSGLIPAY) are mitochondrial matrix. A helical membrane pass occupies residues 84-103 (FSQATMQGIRLGSFDLISNA). Residues 104-117 (LGAKPNQDYFFLKN) are Mitochondrial intermembrane-facing. Residues 118–138 (LLAGATAGAIGAAAGSPFDLV) traverse the membrane as a helical segment. Residues 139 to 174 (KVRMQAANMYKNDPQFVGYSSSFAAFKQIIQKEGFK) lie on the Mitochondrial matrix side of the membrane. Residues 175–195 (GLTRGMLTSAQRTAVGSAIQL) form a helical membrane-spanning segment. Topologically, residues 196-211 (STYGSCKNLVLNFVDD) are mitochondrial intermembrane. Residues 212–232 (GIYAYIISSMVAGFIVTFGMN) form a helical membrane-spanning segment. The Mitochondrial matrix segment spans residues 233–276 (PFDVARTRLYFQGKGNSHGEIYKGLMDCVYKTVKKEGFGAVYKG). Residues 277–295 (FWAHYLRLGPHTILTLVFW) form a helical membrane-spanning segment. Topologically, residues 296-306 (EQFKKLFSGEL) are mitochondrial intermembrane.

This sequence belongs to the mitochondrial carrier (TC 2.A.29) family.

It is found in the mitochondrion inner membrane. Functionally, mitochondrial solute carriers shuttle metabolites, nucleotides, and cofactors through the mitochondrial inner membrane. Transports oxaloacetate and sulfate. In Dictyostelium discoideum (Social amoeba), this protein is Mitochondrial substrate carrier family protein ucpA (ucpA).